Reading from the N-terminus, the 87-residue chain is DNA-directed RNA polymerase subunit omega (87 aa).

Belongs to the RNA polymerase subunit omega family. The RNAP catalytic core consists of 2 alpha, 1 beta, 1 beta' and 1 omega subunit. When a sigma factor is associated with the core the holoenzyme is formed, which can initiate transcription.

It catalyses the reaction RNA(n) + a ribonucleoside 5'-triphosphate = RNA(n+1) + diphosphate. In terms of biological role, promotes RNA polymerase assembly. Latches the N- and C-terminal regions of the beta' subunit thereby facilitating its interaction with the beta and alpha subunits. This is DNA-directed RNA polymerase subunit omega from Thioalkalivibrio sulfidiphilus (strain HL-EbGR7).